A 313-amino-acid chain; its full sequence is Ribose 1,5-bisphosphate isomerase (313 aa).

Residues 17 to 20 and R57 each bind substrate; that span reads RGAA. C121 acts as the Proton acceptor in catalysis. D190 serves as the catalytic Proton donor. Residues 200–201 and K226 contribute to the substrate site; that span reads NK.

This sequence belongs to the eIF-2B alpha/beta/delta subunits family. R15P isomerase subfamily.

It carries out the reaction alpha-D-ribose 1,5-bisphosphate = D-ribulose 1,5-bisphosphate. In terms of biological role, catalyzes the isomerization of ribose 1,5-bisphosphate (R15P) to ribulose 1,5-bisphosphate (RuBP), the CO(2) acceptor and substrate for RubisCO. Functions in an archaeal AMP degradation pathway, together with AMP phosphorylase and RubisCO. The polypeptide is Ribose 1,5-bisphosphate isomerase (Archaeoglobus fulgidus (strain ATCC 49558 / DSM 4304 / JCM 9628 / NBRC 100126 / VC-16)).